Here is a 153-residue protein sequence, read N- to C-terminus: 6,7-dimethyl-8-ribityllumazine synthase (153 aa).

5-amino-6-(D-ribitylamino)uracil is bound by residues Phe-22, 56-58 (AFE), and 80-82 (AVI). 85 to 86 (AT) serves as a coordination point for (2S)-2-hydroxy-3-oxobutyl phosphate. His-88 functions as the Proton donor in the catalytic mechanism. Phe-113 is a binding site for 5-amino-6-(D-ribitylamino)uracil. A (2S)-2-hydroxy-3-oxobutyl phosphate-binding site is contributed by Arg-127.

Belongs to the DMRL synthase family.

It carries out the reaction (2S)-2-hydroxy-3-oxobutyl phosphate + 5-amino-6-(D-ribitylamino)uracil = 6,7-dimethyl-8-(1-D-ribityl)lumazine + phosphate + 2 H2O + H(+). Its pathway is cofactor biosynthesis; riboflavin biosynthesis; riboflavin from 2-hydroxy-3-oxobutyl phosphate and 5-amino-6-(D-ribitylamino)uracil: step 1/2. Catalyzes the formation of 6,7-dimethyl-8-ribityllumazine by condensation of 5-amino-6-(D-ribitylamino)uracil with 3,4-dihydroxy-2-butanone 4-phosphate. This is the penultimate step in the biosynthesis of riboflavin. This Alkaliphilus metalliredigens (strain QYMF) protein is 6,7-dimethyl-8-ribityllumazine synthase.